The primary structure comprises 190 residues: Adenylate kinase (190 aa).

An ATP-binding site is contributed by 10–15 (AAGKGT). The segment at 30-59 (STGDMLRAAIASGSELGQRVSGIMERGELV) is NMP. Residues threonine 31, arginine 36, 57-59 (ELV), 85-88 (GFPR), and glutamine 92 contribute to the AMP site. Residues 126-136 (GRFAESGRADD) form an LID region. An ATP-binding site is contributed by arginine 127. AMP contacts are provided by arginine 133 and arginine 144. ATP is bound at residue glycine 172.

The protein belongs to the adenylate kinase family. In terms of assembly, monomer.

It is found in the cytoplasm. The enzyme catalyses AMP + ATP = 2 ADP. It participates in purine metabolism; AMP biosynthesis via salvage pathway; AMP from ADP: step 1/1. Functionally, catalyzes the reversible transfer of the terminal phosphate group between ATP and AMP. Plays an important role in cellular energy homeostasis and in adenine nucleotide metabolism. The chain is Adenylate kinase from Phenylobacterium zucineum (strain HLK1).